Consider the following 381-residue polypeptide: Tetraacyldisaccharide 4'-kinase (381 aa).

ATP is bound at residue 78–85 (AVGGTGKT).

Belongs to the LpxK family.

The catalysed reaction is a lipid A disaccharide + ATP = a lipid IVA + ADP + H(+). It functions in the pathway glycolipid biosynthesis; lipid IV(A) biosynthesis; lipid IV(A) from (3R)-3-hydroxytetradecanoyl-[acyl-carrier-protein] and UDP-N-acetyl-alpha-D-glucosamine: step 6/6. In terms of biological role, transfers the gamma-phosphate of ATP to the 4'-position of a tetraacyldisaccharide 1-phosphate intermediate (termed DS-1-P) to form tetraacyldisaccharide 1,4'-bis-phosphate (lipid IVA). This chain is Tetraacyldisaccharide 4'-kinase, found in Syntrophobacter fumaroxidans (strain DSM 10017 / MPOB).